Reading from the N-terminus, the 615-residue chain is Mitogen-activated protein kinase 18 (615 aa).

In terms of domain architecture, Protein kinase spans 25–316 (YRILEVIGKG…PAEALADPYF (292 aa)). ATP-binding positions include 31–39 (IGKGSYGVV) and Lys54. The active-site Proton acceptor is the Asp151. At Thr187 the chain carries Phosphothreonine. A TXY motif is present at residues 187-189 (TDY). Position 189 is a phosphotyrosine (Tyr189). The residue at position 192 (Thr192) is a Phosphothreonine. Disordered regions lie at residues 414-483 (RSTV…ESSV) and 510-544 (NTMT…PPAA). Residues 415-426 (STVHSTVVHSTS) are compositionally biased toward low complexity. Residues 445-459 (NGASSAGHPSTSAYP) show a composition bias toward polar residues. Positions 464–473 (GPPPRVPPSG) are enriched in pro residues. 2 stretches are compositionally biased toward polar residues: residues 510–522 (NTMT…NIEA) and 532–544 (PVHQ…PPAA).

It belongs to the protein kinase superfamily. CMGC Ser/Thr protein kinase family. MAP kinase subfamily. As to quaternary structure, interacts with PHS1. Binds to MAPKKK20. Dually phosphorylated on Thr-187 and Tyr-189, which activates the enzyme. Phosphorylated by MAPKKK20. In terms of tissue distribution, expressed in roots, seedlings, leaves, flower buds, flowers and siliques.

The protein resides in the nucleus. Its subcellular location is the cytoplasm. It catalyses the reaction L-seryl-[protein] + ATP = O-phospho-L-seryl-[protein] + ADP + H(+). It carries out the reaction L-threonyl-[protein] + ATP = O-phospho-L-threonyl-[protein] + ADP + H(+). With respect to regulation, activated by threonine and tyrosine phosphorylation. Inactivated by phosphatase PHS1. Functionally, mitogen-activated protein kinase (MAPK) that is specifically regulated by PHS1 and MAPKKK20 and mediates signaling that regulates cortical microtubule functions, maybe through regulation of microtubule dynamic instability. This chain is Mitogen-activated protein kinase 18, found in Arabidopsis thaliana (Mouse-ear cress).